Consider the following 209-residue polypeptide: COP9 signalosome complex subunit 8 (209 aa).

The PCI domain occupies glutamate 8–phenylalanine 179. Serine 175 is modified (phosphoserine).

It belongs to the CSN8 family. As to quaternary structure, component of the CSN complex, composed of COPS1/GPS1, COPS2, COPS3, COPS4, COPS5, COPS6, COPS7 (COPS7A or COPS7B), COPS8 and COPS9 isoform 1. In the complex, it probably interacts directly with COPS3, COPS4 and COPS7 (COPS7A or COPS7B).

It is found in the cytoplasm. Its subcellular location is the nucleus. Its function is as follows. Component of the COP9 signalosome complex (CSN), a complex involved in various cellular and developmental processes. The CSN complex is an essential regulator of the ubiquitin (Ubl) conjugation pathway by mediating the deneddylation of the cullin subunits of SCF-type E3 ligase complexes, leading to decrease the Ubl ligase activity of SCF-type complexes such as SCF, CSA or DDB2. The complex is also involved in phosphorylation of p53/TP53, c-jun/JUN, IkappaBalpha/NFKBIA, ITPK1 and IRF8/ICSBP, possibly via its association with CK2 and PKD kinases. CSN-dependent phosphorylation of TP53 and JUN promotes and protects degradation by the Ubl system, respectively. The protein is COP9 signalosome complex subunit 8 (COPS8) of Homo sapiens (Human).